The chain runs to 265 residues: Undecaprenyl-diphosphatase (265 aa).

8 consecutive transmembrane segments (helical) span residues 14 to 34 (GLGEFLPISSSAHLIIFPWLF), 40 to 60 (SLVFDVALHLGTLLAVLVYFW), 79 to 99 (GKLFWFIIVATIPGALFGYLF), 112 to 132 (LLIAIVLAVFGFILYYVDSIA), 141 to 161 (MNVFQAALIGVSQAFALFPGI), 182 to 202 (AKFSFLMSAPIILGAGAVSLL), 217 to 237 (IGFFTSAVVGFLAIHFLLGIV), and 242 to 262 (FKIFAYYRFFLAAVILAFYLL).

The protein belongs to the UppP family.

It localises to the cell membrane. It catalyses the reaction di-trans,octa-cis-undecaprenyl diphosphate + H2O = di-trans,octa-cis-undecaprenyl phosphate + phosphate + H(+). Its function is as follows. Catalyzes the dephosphorylation of undecaprenyl diphosphate (UPP). Confers resistance to bacitracin. This is Undecaprenyl-diphosphatase from Caldicellulosiruptor bescii (strain ATCC BAA-1888 / DSM 6725 / KCTC 15123 / Z-1320) (Anaerocellum thermophilum).